The following is a 354-amino-acid chain: Ferrochelatase (354 aa).

Residues histidine 204 and glutamate 306 each contribute to the Fe cation site.

Belongs to the ferrochelatase family.

The protein localises to the cytoplasm. It carries out the reaction heme b + 2 H(+) = protoporphyrin IX + Fe(2+). It functions in the pathway porphyrin-containing compound metabolism; protoheme biosynthesis; protoheme from protoporphyrin-IX: step 1/1. Its function is as follows. Catalyzes the ferrous insertion into protoporphyrin IX. This is Ferrochelatase from Coxiella burnetii (strain RSA 493 / Nine Mile phase I).